The sequence spans 942 residues: MNWNKGGPGTKRGFGFGGFAISAGKKEEPKLPQQSHSAFGATSSSSGFGKSAPPQLPSFYKIGSKRANFDEENAYFEDEEEDSSNVDLPYIPAENSPTRQQFHSKPIDSDSDDDPLEAFMAEVEDQAARDMKRLEEKDKERKNVKGIRDDIEEEDDQETYFRYMAENPTAGVVQEEEEDNLEYDSDGNPIAPTKKIIDPLPPIDHSEIDYPPFEKNFYNEHEEITNLTPQQLIDLRHKLNLRVSGAAPPRPGSSFAHFGFDEQLMHQIRKSEYTQPTPIQCQGVPVALSGRDMIGIAKTGSGKTAAFIWPMLIHIMDQKELEPGDGPIAVIVCPTRELCQQIHAEGKRFGKAYNLRSVAVYGGGSMWEQAKALQEGAEIVVCTPGRLIDHVKKKATNLQRVSYLVFDEADRMFDMGFEYQVRSIASHVRPDRQTLLFSATFRKKIEKLARDILIDPIRVVQGDIGEANEDVTQIVEILHSGPSKWNWLTRRLVEFTSSGSVLLFVTKKANAEELANNLKQEGHNLGLLHGDMDQSERNKVISDFKKKDIPVLVATDVAARGLDIPSIKTVINYDVARDIDTHTHRIGRTGRAGEKGVAYTLLTPKDSNFAGDLVRNLEGANQHVSKELLDLAMQNAWFRKSRFKGGKGKKLNIGGGGLGYRERPGLGSENMDRGNNNVMSNYEAYKPSTGAMGDRLTAMKAAFQSQYKSHFVAASLSNQKAGSSAAGASGWTSAGSLNSVPTNSAQQGHNSPDSPITSATKGIPGFGNIGNISGAPVTYPSAGAQGVNNTASGNNSREGTGGSNGKRERYTENRGSSRHSHGETGNRHSDSPRHGDGGRHGDGYRHPESSSRHTDGHRHGENRHGGSAGRHGENRGANDGRNGESRKEACNRESKMEPKMEPKMEPKVDSNKMDKVDSKTDKTADGFAVPEPPKRKKSRWDS.

Residues 1-18 are compositionally biased toward gly residues; sequence MNWNKGGPGTKRGFGFGG. The tract at residues 1–114 is disordered; sequence MNWNKGGPGT…KPIDSDSDDD (114 aa). N6-acetyllysine is present on Lys-5. At Arg-12 the chain carries Omega-N-methylarginine. Positions 35–52 are enriched in low complexity; sequence SHSAFGATSSSSGFGKSA. Phosphoserine is present on Ser-58. The span at 70–84 shows a compositional bias: acidic residues; the sequence is DEENAYFEDEEEDSS. A phosphoserine mark is found at Ser-96, Ser-104, Ser-109, and Ser-111. A coiled-coil region spans residues 116 to 157; that stretch reads LEAFMAEVEDQAARDMKRLEEKDKERKNVKGIRDDIEEEDDQ. The interval 182 to 203 is disordered; sequence EYDSDGNPIAPTKKIIDPLPPI. Ser-185 is subject to Phosphoserine. Residues 253–281 carry the Q motif motif; sequence SSFAHFGFDEQLMHQIRKSEYTQPTPIQC. Positions 284–459 constitute a Helicase ATP-binding domain; sequence VPVALSGRDM…RDILIDPIRV (176 aa). 297-304 lines the ATP pocket; the sequence is AKTGSGKT. Positions 407–410 match the DEAD box motif; the sequence is DEAD. The Helicase C-terminal domain occupies 487–632; the sequence is WLTRRLVEFT…HVSKELLDLA (146 aa). Composition is skewed to polar residues over residues 737 to 760 and 786 to 798; these read LNSV…TSAT and GVNN…NSRE. 2 disordered regions span residues 737-762 and 783-942; these read LNSV…ATKG and GAQG…RWDS. The necessary for interaction with TP53BP2 stretch occupies residues 738 to 833; the sequence is NSVPTNSAQQ…TGNRHSDSPR (96 aa). At Ser-754 the chain carries Phosphoserine. Over residues 820–924 the composition is skewed to basic and acidic residues; it reads SHGETGNRHS…KVDSKTDKTA (105 aa). Residue Lys-899 forms a Glycyl lysine isopeptide (Lys-Gly) (interchain with G-Cter in SUMO2) linkage.

It belongs to the DEAD box helicase family. DDX42 subfamily. Transient component of the SF3B subcomplex of the 17S U2 SnRNP complex. Interacts (via the C-terminus) with TP53BP2; the interaction is not inhibitied by TP53BP2 ubiquitination and is independent of p53/TP53.

The protein resides in the cytoplasm. The protein localises to the nucleus. It carries out the reaction ATP + H2O = ADP + phosphate + H(+). Its function is as follows. ATP-dependent RNA helicase that binds to partially double-stranded RNAs (dsRNAs) in order to unwind RNA secondary structures. Unwinding is promoted in the presence of single-strand binding proteins. Also mediates RNA duplex formation thereby displacing the single-strand RNA binding protein. ATP and ADP modulate its activity: ATP binding and hydrolysis by DDX42 triggers RNA strand separation, whereas the ADP-bound form of the protein triggers annealing of complementary RNA strands. Required for assembly of the 17S U2 SnRNP complex of the spliceosome, a large ribonucleoprotein complex that removes introns from transcribed pre-mRNAs: DDX42 associates transiently with the SF3B subcomplex of the 17S U2 SnRNP complex and is released after fulfilling its role in the assembly of 17S U2 SnRNP. Involved in the survival of cells by interacting with TP53BP2 and thereby counteracting the apoptosis-stimulating activity of TP53BP2. Relocalizes TP53BP2 to the cytoplasm. The sequence is that of ATP-dependent RNA helicase DDX42 (DDX42) from Pongo abelii (Sumatran orangutan).